A 201-amino-acid chain; its full sequence is Diadenylate cyclase CdaS (201 aa).

In terms of domain architecture, DAC spans 54-201 (QTLAATYYIQ…LNGILYTISL (148 aa)).

Belongs to the adenylate cyclase family. DacB/CdaS subfamily. Probably forms a homohexamer. Mg(2+) serves as cofactor.

The catalysed reaction is 2 ATP = 3',3'-c-di-AMP + 2 diphosphate. One of 3 paralogous diadenylate cyclases (DAC) in this bacteria catalyzing the condensation of 2 ATP molecules into cyclic di-AMP (c-di-AMP). It has slow DAC activity with ADP as a substrate and may have weak ADPase activity. Required for efficient spore formation, whereas in B.subtilis, it is required for efficient spore germination. It is produced under the control of different sigma factors in the two bacteria. It is also required for parasporal crystal formation. The polypeptide is Diadenylate cyclase CdaS (Bacillus thuringiensis (strain BMB171)).